A 459-amino-acid polypeptide reads, in one-letter code: ATP synthase subunit beta (459 aa).

149–156 serves as a coordination point for ATP; it reads GGAGVGKT.

Belongs to the ATPase alpha/beta chains family. In terms of assembly, F-type ATPases have 2 components, CF(1) - the catalytic core - and CF(0) - the membrane proton channel. CF(1) has five subunits: alpha(3), beta(3), gamma(1), delta(1), epsilon(1). CF(0) has three main subunits: a(1), b(2) and c(9-12). The alpha and beta chains form an alternating ring which encloses part of the gamma chain. CF(1) is attached to CF(0) by a central stalk formed by the gamma and epsilon chains, while a peripheral stalk is formed by the delta and b chains.

It is found in the cell inner membrane. It carries out the reaction ATP + H2O + 4 H(+)(in) = ADP + phosphate + 5 H(+)(out). In terms of biological role, produces ATP from ADP in the presence of a proton gradient across the membrane. The catalytic sites are hosted primarily by the beta subunits. This Pseudomonas syringae pv. tomato (strain ATCC BAA-871 / DC3000) protein is ATP synthase subunit beta.